The chain runs to 192 residues: Protein GrpE (192 aa).

The disordered stretch occupies residues 1 to 43; it reads MSKEEFPHEKDLKDEVTPDKAPKKDPKAASKEEVKEDPAKDYE.

It belongs to the GrpE family. As to quaternary structure, homodimer.

Its subcellular location is the cytoplasm. Its function is as follows. Participates actively in the response to hyperosmotic and heat shock by preventing the aggregation of stress-denatured proteins, in association with DnaK and GrpE. It is the nucleotide exchange factor for DnaK and may function as a thermosensor. Unfolded proteins bind initially to DnaJ; upon interaction with the DnaJ-bound protein, DnaK hydrolyzes its bound ATP, resulting in the formation of a stable complex. GrpE releases ADP from DnaK; ATP binding to DnaK triggers the release of the substrate protein, thus completing the reaction cycle. Several rounds of ATP-dependent interactions between DnaJ, DnaK and GrpE are required for fully efficient folding. This chain is Protein GrpE, found in Lactobacillus gasseri (strain ATCC 33323 / DSM 20243 / BCRC 14619 / CIP 102991 / JCM 1131 / KCTC 3163 / NCIMB 11718 / NCTC 13722 / AM63).